Here is a 207-residue protein sequence, read N- to C-terminus: Ribonuclease HII (207 aa).

An RNase H type-2 domain is found at 12 to 205 (GLVVGIDEVG…IRNMIEAEAH (194 aa)). A divalent metal cation contacts are provided by Asp18, Glu19, and Asp114.

The protein belongs to the RNase HII family. It depends on Mn(2+) as a cofactor. Mg(2+) is required as a cofactor.

The protein resides in the cytoplasm. It carries out the reaction Endonucleolytic cleavage to 5'-phosphomonoester.. Endonuclease that specifically degrades the RNA of RNA-DNA hybrids. This chain is Ribonuclease HII, found in Gluconobacter oxydans (strain 621H) (Gluconobacter suboxydans).